The sequence spans 404 residues: Glutamate-pyruvate aminotransferase AlaA (404 aa).

L-alanine is bound by residues Gly-41 and Asn-179. Lys-240 carries the post-translational modification N6-(pyridoxal phosphate)lysine. Residue Arg-378 participates in L-alanine binding.

The protein belongs to the class-I pyridoxal-phosphate-dependent aminotransferase family. As to quaternary structure, homodimer. Pyridoxal 5'-phosphate serves as cofactor.

It catalyses the reaction L-alanine + 2-oxoglutarate = pyruvate + L-glutamate. The protein operates within amino-acid biosynthesis; L-alanine biosynthesis. Its function is as follows. Involved in the biosynthesis of alanine. Catalyzes the transamination of pyruvate by glutamate, leading to the formation of L-alanine and 2-oxoglutarate. Is also able to catalyze the reverse reaction. This Haemophilus influenzae (strain ATCC 51907 / DSM 11121 / KW20 / Rd) protein is Glutamate-pyruvate aminotransferase AlaA (alaA).